A 491-amino-acid polypeptide reads, in one-letter code: Stage IV sporulation protein A (491 aa).

Residues Gly23–Ser30 carry the Walker A motif; involved in ATP-binding motif. ATP is bound at residue Gly23–Ser30. Residues Gln334–Lys362 adopt a coiled-coil conformation.

As to quaternary structure, interacts (via Walker A motif) with SipL (via C-terminus LysM domain).

It localises to the cytoplasm. It catalyses the reaction ATP + H2O = ADP + phosphate + H(+). Functionally, ATPase. Has a role at an early stage in the morphogenesis of the spore coat and is required for proper coat localization to the forespore. The sequence is that of Stage IV sporulation protein A from Clostridioides difficile (strain 630) (Peptoclostridium difficile).